We begin with the raw amino-acid sequence, 117 residues long: Large ribosomal subunit protein bL20 (117 aa).

It belongs to the bacterial ribosomal protein bL20 family.

In terms of biological role, binds directly to 23S ribosomal RNA and is necessary for the in vitro assembly process of the 50S ribosomal subunit. It is not involved in the protein synthesizing functions of that subunit. The protein is Large ribosomal subunit protein bL20 of Symbiobacterium thermophilum (strain DSM 24528 / JCM 14929 / IAM 14863 / T).